The following is a 122-amino-acid chain: UPF0102 protein VIBHAR_00890 (122 aa).

It belongs to the UPF0102 family.

The sequence is that of UPF0102 protein VIBHAR_00890 from Vibrio campbellii (strain ATCC BAA-1116).